We begin with the raw amino-acid sequence, 355 residues long: UDP-N-acetylglucosamine--N-acetylmuramyl-(pentapeptide) pyrophosphoryl-undecaprenol N-acetylglucosamine transferase (355 aa).

Residues 14 to 16, Asn-126, Arg-162, Ser-190, Ile-243, 262 to 267, and Gln-288 contribute to the UDP-N-acetyl-alpha-D-glucosamine site; these read SGG and ALTVSE.

It belongs to the glycosyltransferase 28 family. MurG subfamily.

Its subcellular location is the cell inner membrane. The enzyme catalyses di-trans,octa-cis-undecaprenyl diphospho-N-acetyl-alpha-D-muramoyl-L-alanyl-D-glutamyl-meso-2,6-diaminopimeloyl-D-alanyl-D-alanine + UDP-N-acetyl-alpha-D-glucosamine = di-trans,octa-cis-undecaprenyl diphospho-[N-acetyl-alpha-D-glucosaminyl-(1-&gt;4)]-N-acetyl-alpha-D-muramoyl-L-alanyl-D-glutamyl-meso-2,6-diaminopimeloyl-D-alanyl-D-alanine + UDP + H(+). Its pathway is cell wall biogenesis; peptidoglycan biosynthesis. Functionally, cell wall formation. Catalyzes the transfer of a GlcNAc subunit on undecaprenyl-pyrophosphoryl-MurNAc-pentapeptide (lipid intermediate I) to form undecaprenyl-pyrophosphoryl-MurNAc-(pentapeptide)GlcNAc (lipid intermediate II). This chain is UDP-N-acetylglucosamine--N-acetylmuramyl-(pentapeptide) pyrophosphoryl-undecaprenol N-acetylglucosamine transferase, found in Blochmanniella pennsylvanica (strain BPEN).